A 272-amino-acid polypeptide reads, in one-letter code: 4-hydroxy-tetrahydrodipicolinate reductase (272 aa).

Residues 10-15 (GAGGRM), Glu-36, 100-102 (GTT), and 124-127 (SGNM) each bind NAD(+). Residue His-157 is the Proton donor/acceptor of the active site. Residue His-158 coordinates (S)-2,3,4,5-tetrahydrodipicolinate. The Proton donor role is filled by Lys-161. Residue 167 to 168 (GT) coordinates (S)-2,3,4,5-tetrahydrodipicolinate.

This sequence belongs to the DapB family.

The protein localises to the cytoplasm. The catalysed reaction is (S)-2,3,4,5-tetrahydrodipicolinate + NAD(+) + H2O = (2S,4S)-4-hydroxy-2,3,4,5-tetrahydrodipicolinate + NADH + H(+). The enzyme catalyses (S)-2,3,4,5-tetrahydrodipicolinate + NADP(+) + H2O = (2S,4S)-4-hydroxy-2,3,4,5-tetrahydrodipicolinate + NADPH + H(+). The protein operates within amino-acid biosynthesis; L-lysine biosynthesis via DAP pathway; (S)-tetrahydrodipicolinate from L-aspartate: step 4/4. Its function is as follows. Catalyzes the conversion of 4-hydroxy-tetrahydrodipicolinate (HTPA) to tetrahydrodipicolinate. The polypeptide is 4-hydroxy-tetrahydrodipicolinate reductase (Bradyrhizobium sp. (strain ORS 278)).